Reading from the N-terminus, the 336-residue chain is Foldase protein PrsA (336 aa).

Residues 1-22 (MKSAKKLLSVLCLGIFILTFTA) form the signal peptide. Residue C23 is the site of N-palmitoyl cysteine attachment. Residue C23 is the site of S-diacylglycerol cysteine attachment. The PpiC domain maps to 194 to 286 (PNTMNVSHIL…WGYHIIKINS (93 aa)).

Belongs to the PrsA family.

The protein localises to the cell membrane. The enzyme catalyses [protein]-peptidylproline (omega=180) = [protein]-peptidylproline (omega=0). Its function is as follows. Plays a major role in protein secretion by helping the post-translocational extracellular folding of several secreted proteins. This Clostridium botulinum (strain Langeland / NCTC 10281 / Type F) protein is Foldase protein PrsA.